A 648-amino-acid polypeptide reads, in one-letter code: Macrolide export ATP-binding/permease protein MacB (648 aa).

Positions 6-251 (IRVRGVSRAF…GPSAGWRGAI (246 aa)) constitute an ABC transporter domain. Position 42-49 (42-49 (GASGSGKS)) interacts with ATP. 4 consecutive transmembrane segments (helical) span residues 273-293 (LLTMLGIIIGIASVAAISALG), 528-548 (VAVISLIVGGIGVMNIMLVSV), 572-592 (FLIEAVMVCLVGGLMGIMLAL), and 613-633 (SIIVAFACSTLIGIVFGFLPA).

This sequence belongs to the ABC transporter superfamily. Macrolide exporter (TC 3.A.1.122) family. Homodimer.

Its subcellular location is the cell inner membrane. Non-canonical ABC transporter that contains transmembrane domains (TMD), which form a pore in the inner membrane, and an ATP-binding domain (NBD), which is responsible for energy generation. Confers resistance against macrolides. The chain is Macrolide export ATP-binding/permease protein MacB from Agrobacterium fabrum (strain C58 / ATCC 33970) (Agrobacterium tumefaciens (strain C58)).